Reading from the N-terminus, the 492-residue chain is Stage IV sporulation protein A (492 aa).

A Walker A motif; involved in ATP-binding motif is present at residues 24 to 31 (GAVRTGKS). An ATP-binding site is contributed by 24-31 (GAVRTGKS).

Its subcellular location is the cytoplasm. The catalysed reaction is ATP + H2O = ADP + phosphate + H(+). Its function is as follows. ATPase. Has a role at an early stage in the morphogenesis of the spore coat outer layers. Directs the assembly of the coat and exosporium to an area around the forespore. This is Stage IV sporulation protein A from Bacillus anthracis.